Reading from the N-terminus, the 468-residue chain is bZIP transcription factor 14 (468 aa).

Disordered regions lie at residues 55–149 (SRRK…EGRA) and 234–272 (SPQSMSDGGGEEVASTSDVSGDEQQVPDDGIDYDLLGKD). 2 stretches are compositionally biased toward low complexity: residues 64 to 82 (SFVSGSDSSRSSTKSSSGS) and 95 to 106 (VTAASTESVSSS). The segment covering 112 to 128 (KKADTDDRVQRSRERNR) has biased composition (basic and acidic residues). The 49-residue stretch at 117-165 (DDRVQRSRERNRIHARKTRQRKKEQMQSLEGRATDLKHEQIRLKQIINE) folds into the bZIP 1 domain. Residues 119-139 (RVQRSRERNRIHARKTRQRKK) are basic motif 1. Positions 129 to 138 (IHARKTRQRK) are enriched in basic residues. The leucine-zipper 1 stretch occupies residues 145 to 159 (LEGRATDLKHEQIRL). Positions 247 to 256 (ASTSDVSGDE) are enriched in polar residues. The region spanning 279 to 333 (EELDQIRRERNRMHAKRTRDRKRIFTEEMAEMCRILEEENHLLRVHLGGLDSDFK) is the bZIP 2 domain. A basic motif 2 region spans residues 285–312 (RRERNRMHAKRTRDRKRIFTEEMAEMCR). The interval 313–320 (ILEEENHL) is leucine-zipper 2. The tract at residues 400–468 (ERQQREAERK…TTSLAAPVGW (69 aa)) is disordered. Residues 401–410 (RQQREAERKV) show a composition bias toward basic and acidic residues. The segment covering 417-426 (SAASDTSTSD) has biased composition (low complexity).

It belongs to the bZIP family.

The protein resides in the nucleus. Transcriptional activator which binds to the C-box-like motif 5'-TGACGT-3' and A-box-like motif 5'-GTACGTA-3' of target promoters to positively regulate the expression of genes involved in the tricarboxylic acid (TCA) cycle in response to nitrogen starvation. May also regulate the TCA cycle during day-to-night transitions. The protein is bZIP transcription factor 14 of Phaeodactylum tricornutum (strain CCAP 1055/1).